A 500-amino-acid polypeptide reads, in one-letter code: Kynurenine 3-monooxygenase (500 aa).

This sequence belongs to the aromatic-ring hydroxylase family. KMO subfamily. FAD serves as cofactor.

The protein localises to the mitochondrion outer membrane. The enzyme catalyses L-kynurenine + NADPH + O2 + H(+) = 3-hydroxy-L-kynurenine + NADP(+) + H2O. It participates in cofactor biosynthesis; NAD(+) biosynthesis; quinolinate from L-kynurenine: step 1/3. Catalyzes the hydroxylation of L-kynurenine (L-Kyn) to form 3-hydroxy-L-kynurenine (L-3OHKyn). Required for synthesis of quinolinic acid. In Aspergillus terreus (strain NIH 2624 / FGSC A1156), this protein is Kynurenine 3-monooxygenase (bna4).